We begin with the raw amino-acid sequence, 479 residues long: Adenosylhomocysteinase (479 aa).

3 residues coordinate substrate: threonine 66, aspartate 142, and glutamate 203. 204-206 (TTT) lines the NAD(+) pocket. 2 residues coordinate substrate: lysine 233 and aspartate 237. NAD(+)-binding positions include asparagine 238, 267–272 (GYGDVG), glutamate 290, asparagine 325, 346–348 (IGH), and asparagine 394.

It belongs to the adenosylhomocysteinase family. Requires NAD(+) as cofactor.

Its subcellular location is the cytoplasm. The enzyme catalyses S-adenosyl-L-homocysteine + H2O = L-homocysteine + adenosine. The protein operates within amino-acid biosynthesis; L-homocysteine biosynthesis; L-homocysteine from S-adenosyl-L-homocysteine: step 1/1. Functionally, may play a key role in the regulation of the intracellular concentration of adenosylhomocysteine. This Nitratidesulfovibrio vulgaris (strain ATCC 29579 / DSM 644 / CCUG 34227 / NCIMB 8303 / VKM B-1760 / Hildenborough) (Desulfovibrio vulgaris) protein is Adenosylhomocysteinase.